The sequence spans 197 residues: dITP/XTP pyrophosphatase (197 aa).

Threonine 8 to lysine 13 contacts substrate. The Mg(2+) site is built by glutamate 40 and aspartate 69. Aspartate 69 (proton acceptor) is an active-site residue. Residues serine 70, phenylalanine 154 to aspartate 157, lysine 177, and histidine 182 to arginine 183 contribute to the substrate site.

This sequence belongs to the HAM1 NTPase family. As to quaternary structure, homodimer. The cofactor is Mg(2+).

It carries out the reaction XTP + H2O = XMP + diphosphate + H(+). It catalyses the reaction dITP + H2O = dIMP + diphosphate + H(+). The catalysed reaction is ITP + H2O = IMP + diphosphate + H(+). Pyrophosphatase that catalyzes the hydrolysis of nucleoside triphosphates to their monophosphate derivatives, with a high preference for the non-canonical purine nucleotides XTP (xanthosine triphosphate), dITP (deoxyinosine triphosphate) and ITP. Seems to function as a house-cleaning enzyme that removes non-canonical purine nucleotides from the nucleotide pool, thus preventing their incorporation into DNA/RNA and avoiding chromosomal lesions. This is dITP/XTP pyrophosphatase from Pectobacterium atrosepticum (strain SCRI 1043 / ATCC BAA-672) (Erwinia carotovora subsp. atroseptica).